The sequence spans 638 residues: Chaperone protein DnaK (638 aa).

Residue T198 is modified to Phosphothreonine; by autocatalysis. Over residues 603-618 (QQAQAQQAQGADADAQ) the composition is skewed to low complexity. Residues 603-638 (QQAQAQQAQGADADAQQSKEDDVVDAEFEEVKDDKK) are disordered. Residues 624–638 (DVVDAEFEEVKDDKK) are compositionally biased toward acidic residues.

Belongs to the heat shock protein 70 family.

Its function is as follows. Acts as a chaperone. In Vibrio campbellii (strain ATCC BAA-1116), this protein is Chaperone protein DnaK.